The primary structure comprises 230 residues: Inactive L-threonine 3-dehydrogenase, mitochondrial (230 aa).

It belongs to the NAD(P)-dependent epimerase/dehydratase family. As to expression, expressed in all tissues examined. Detected in most cell types examined, but not observed in endothelial cells, glioma cell lines and some leukemia cell lines.

The protein resides in the mitochondrion. This chain is Inactive L-threonine 3-dehydrogenase, mitochondrial, found in Homo sapiens (Human).